We begin with the raw amino-acid sequence, 339 residues long: Serine/arginine-rich splicing factor 6 (339 aa).

The 71-residue stretch at 2–72 (PRVYIGRLSY…ERVIVEHARG (71 aa)) folds into the RRM 1 domain. Phosphoserine is present on residues serine 45, serine 81, and serine 84. Residues 75-103 (RDRDGYSYGSRSGGGGYSSRRTSGRDKYG) are disordered. An RRM 2 domain is found at 110 to 183 (YRLIVENLSS…RNIRLIEDKP (74 aa)). An N6-acetyllysine modification is found at lysine 165. Positions 176–339 (IRLIEDKPRT…RSRSRSSSRD (164 aa)) are disordered. Lysine 182 is covalently cross-linked (Glycyl lysine isopeptide (Lys-Gly) (interchain with G-Cter in SUMO2)). Basic residues predominate over residues 185 to 250 (TSHRRSYSGS…RKSRSKSKSK (66 aa)). The span at 280–291 (SPKENGKGDIKS) shows a compositional bias: basic and acidic residues. Serine 297 and serine 299 each carry phosphoserine. Serine 303 is modified (phosphoserine; by DYRK1A). Phosphoserine is present on residues serine 314 and serine 316. Basic residues predominate over residues 321 to 339 (RASRSRSRSRSRSRSSSRD).

Belongs to the splicing factor SR family. In terms of assembly, binds SREK1/SFRS12. Interacts with DYRK1A. Interacts with RBMY; the interaction inhibits SRSF6 pre-mRNA splicing. Post-translationally, extensively phosphorylated on serine residues in the RS domain. Phosphorylated by DYRK1A, probably in the RS domain. Phosphorylation by DYRK1A modulates alternative splice site selection and inhibits the expression of MAPT/Tau exon 10.

The protein localises to the nucleus. Its subcellular location is the nucleus speckle. Its function is as follows. Plays a role in constitutive splicing and modulates the selection of alternative splice sites. Plays a role in the alternative splicing of MAPT/Tau exon 10. Binds to alternative exons of TNC pre-mRNA and promotes the expression of alternatively spliced TNC. Plays a role in wound healing and in the regulation of keratinocyte differentiation and proliferation via its role in alternative splicing. In Mus musculus (Mouse), this protein is Serine/arginine-rich splicing factor 6 (Srsf6).